The following is a 440-amino-acid chain: Actin-like protein 7A (440 aa).

The interval 1–29 is disordered; it reads MSLDGVWAPQTANIGDGPAKKASDQASMQ. The tract at residues 36–56 is required for interaction with TES; the sequence is ASLKDGPAKRAVWVRRDNAET.

Belongs to the actin family. As to quaternary structure, interacts (via N-terminus) with TES (via LIM domain 2). Heterodimer with TES; the heterodimer interacts with ENAH to form a heterotrimer. Interacts with ACTL9. Interacts with CYLC1; the interaction may be relevant for proper acrosome attachment to the nuclear envelope. In terms of tissue distribution, detected in testis. Detected at the acrosome of round spermatids (at protein level). Detected in adult and embryonic testis. Detected in developing male germ cells.

Its subcellular location is the cytoplasm. The protein localises to the cytoskeleton. The protein resides in the golgi apparatus. It is found in the nucleus. It localises to the cytoplasmic vesicle. Its subcellular location is the secretory vesicle. The protein localises to the acrosome. Functionally, essential for normal spermatogenesis and male fertility. Required for normal sperm head morphology, acroplaxome formation, acrosome attachment, and acrosome granule stability. May anchor and stabilize acrosomal adherence to the acroplaxome at least in part by facilitating the presence of F-actin in the subacrosomal space. May play an important role in formation and fusion of Golgi-derived vesicles during acrosome biogenesis. The sequence is that of Actin-like protein 7A (Actl7a) from Mus musculus (Mouse).